A 514-amino-acid chain; its full sequence is Protein translocase subunit SecD (514 aa).

5 helical membrane passes run 7–27 (WKIFLSIICTIFAVICALPNF), 357–377 (IIGFAAVCIFMVWSYGLLGLF), 389–409 (VLALLSLFQATLTLPGIAGII), 448–470 (FATILDSNLTTLIVAFLLYIFGV), and 482–502 (IGIISSMFSAIIITKLLIDIW).

This sequence belongs to the SecD/SecF family. SecD subfamily. In terms of assembly, forms a complex with SecF. Part of the essential Sec protein translocation apparatus which comprises SecA, SecYEG and auxiliary proteins SecDF-YajC and YidC.

Its subcellular location is the cell inner membrane. Part of the Sec protein translocase complex. Interacts with the SecYEG preprotein conducting channel. SecDF uses the proton motive force (PMF) to complete protein translocation after the ATP-dependent function of SecA. The chain is Protein translocase subunit SecD from Rickettsia bellii (strain RML369-C).